Reading from the N-terminus, the 552-residue chain is (R)-mandelonitrile lyase-like (552 aa).

An N-terminal signal peptide occupies residues 1–28; it reads MTKRIDSSLLYTALVVLLLLGVVHRSNA. Asn-44 is a glycosylation site (N-linked (GlcNAc...) asparagine). An FAD-binding site is contributed by 55 to 82; it reads DYIIVGGGTAGCPLAATLSQSFRVLLLE. Residues Asn-162, Asn-259, and Asn-434 are each glycosylated (N-linked (GlcNAc...) asparagine). His-492 acts as the Proton acceptor in catalysis.

It belongs to the GMC oxidoreductase family. Monomer. It depends on FAD as a cofactor. Glycosylated.

The catalysed reaction is (R)-mandelonitrile = benzaldehyde + hydrogen cyanide. This chain is (R)-mandelonitrile lyase-like, found in Arabidopsis thaliana (Mouse-ear cress).